Reading from the N-terminus, the 360-residue chain is Peptide chain release factor 1 (360 aa).

At Q234 the chain carries N5-methylglutamine.

The protein belongs to the prokaryotic/mitochondrial release factor family. Methylated by PrmC. Methylation increases the termination efficiency of RF1.

Its subcellular location is the cytoplasm. In terms of biological role, peptide chain release factor 1 directs the termination of translation in response to the peptide chain termination codons UAG and UAA. The sequence is that of Peptide chain release factor 1 from Renibacterium salmoninarum (strain ATCC 33209 / DSM 20767 / JCM 11484 / NBRC 15589 / NCIMB 2235).